Reading from the N-terminus, the 247-residue chain is uncharacterized protein (247 aa).

The N-acetyltransferase domain occupies 70–205; it reads ISLWMGPGNN…QKVPLEIMIR (136 aa).

Belongs to the acetyltransferase family.

Its subcellular location is the endoplasmic reticulum. The protein localises to the golgi apparatus. It is found in the vacuole. This is an uncharacterized protein from Schizosaccharomyces pombe (strain 972 / ATCC 24843) (Fission yeast).